We begin with the raw amino-acid sequence, 736 residues long: Catalase-peroxidase (736 aa).

Over residues 1–10 the composition is skewed to basic and acidic residues; that stretch reads MDAKTDDKGA. A disordered region spans residues 1–26; sequence MDAKTDDKGAGKCPFSGGSHGHRNRD. The segment at residues 96–218 is a cross-link (tryptophyl-tyrosyl-methioninium (Trp-Tyr) (with M-244)); sequence WHSAGTYRIT…LGAVQMGLIY (123 aa). The Proton acceptor role is filled by H97. Residues 218–244 constitute a cross-link (tryptophyl-tyrosyl-methioninium (Tyr-Met) (with W-96)); sequence YVNPEGPNGNPDPVAAAKDIRETFARM. H259 provides a ligand contact to heme b.

This sequence belongs to the peroxidase family. Peroxidase/catalase subfamily. In terms of assembly, homodimer or homotetramer. The cofactor is heme b. Post-translationally, formation of the three residue Trp-Tyr-Met cross-link is important for the catalase, but not the peroxidase activity of the enzyme.

The catalysed reaction is H2O2 + AH2 = A + 2 H2O. The enzyme catalyses 2 H2O2 = O2 + 2 H2O. In terms of biological role, bifunctional enzyme with both catalase and broad-spectrum peroxidase activity. This Rhodopseudomonas palustris (strain ATCC BAA-98 / CGA009) protein is Catalase-peroxidase.